Reading from the N-terminus, the 571-residue chain is Urease subunit alpha (571 aa).

H138, H140, and K221 together coordinate Ni(2+). An N6-carboxylysine modification is found at K221. H223 contacts substrate. 2 residues coordinate Ni(2+): H250 and H276. Catalysis depends on H324, which acts as the Proton donor. D364 is a binding site for Ni(2+).

This sequence belongs to the metallo-dependent hydrolases superfamily. Urease alpha subunit family. As to quaternary structure, heterotrimer of UreA (gamma), UreB (beta) and UreC (alpha) subunits. Three heterotrimers associate to form the active enzyme. The cofactor is Ni cation. Post-translationally, carboxylation allows a single lysine to coordinate two nickel ions.

Its subcellular location is the cytoplasm. The enzyme catalyses urea + 2 H2O + H(+) = hydrogencarbonate + 2 NH4(+). It functions in the pathway nitrogen metabolism; urea degradation; CO(2) and NH(3) from urea (urease route): step 1/1. In Staphylococcus aureus (strain JH9), this protein is Urease subunit alpha.